The chain runs to 354 residues: MALTTHSGKLIPELQFKAHHFIDKTTVLYGPSKTGKTVYVKHIMKILQPHIEQILVVAPSEPSNRSYEGFVHPTLIHYRLWLADKQKKNDNKGAERFLEAIWQRQTMMSSIYSRVNNIDMLKTLYHKLPIDIQQKENKNIAKVECLKAEQTDQKKEEKITSLYQQLLKKIIIQNIHMYKNLCLTEDEKFTLNYINLNPRLLLILDDCAAELHPLFTKEIFKKFFYQNRHCFISMIICCQDDTDLPANLRKNAFVSIFTNASICMSNFSRQSNRYSKQDKEYVEEISHIVFKGYRKLVYIREDENRQHFYHSTVPLPTAFSFGSKALLKLCKAVYSKEVVIDKSNPYWSKFRLTF.

This sequence belongs to the asfivirus B354L family.

This is an uncharacterized protein from African swine fever virus (isolate Tick/South Africa/Pretoriuskop Pr4/1996) (ASFV).